A 104-amino-acid polypeptide reads, in one-letter code: Glycine-rich protein (104 aa).

Positions 1–18 (MKSMIAAILFALVATSLA) are cleaved as a signal peptide.

The protein belongs to the non-disulfide-bridged peptide (NDBP) superfamily. As to expression, expressed by the venom gland.

It localises to the secreted. The polypeptide is Glycine-rich protein (Lychas mucronatus (Chinese swimming scorpion)).